Here is a 987-residue protein sequence, read N- to C-terminus: Valine--tRNA ligase (987 aa).

The short motif at 45-55 (PNVTGSLHMGH) is the 'HIGH' region element. The short motif at 634–638 (KMSKS) is the 'KMSKS' region element. Lys-637 lines the ATP pocket. The stretch at 917–985 (VIDIGAEKAR…LSAALARLSE (69 aa)) forms a coiled coil.

The protein belongs to the class-I aminoacyl-tRNA synthetase family. ValS type 1 subfamily. As to quaternary structure, monomer.

Its subcellular location is the cytoplasm. It catalyses the reaction tRNA(Val) + L-valine + ATP = L-valyl-tRNA(Val) + AMP + diphosphate. Functionally, catalyzes the attachment of valine to tRNA(Val). As ValRS can inadvertently accommodate and process structurally similar amino acids such as threonine, to avoid such errors, it has a 'posttransfer' editing activity that hydrolyzes mischarged Thr-tRNA(Val) in a tRNA-dependent manner. This chain is Valine--tRNA ligase, found in Cereibacter sphaeroides (strain ATCC 17023 / DSM 158 / JCM 6121 / CCUG 31486 / LMG 2827 / NBRC 12203 / NCIMB 8253 / ATH 2.4.1.) (Rhodobacter sphaeroides).